A 111-amino-acid chain; its full sequence is C-type lectin lectoxin-Enh1 (111 aa).

The first 23 residues, 1–23, serve as a signal peptide directing secretion; the sequence is MGQFTVVSLGLLAMFLSLSGAKG. A disulfide bridge links Cys26 with Cys37. One can recognise a C-type lectin domain in the interval 33 to 108; the sequence is RNGVCNKLFP…CASLHPFICQ (76 aa). The Mannose-binding motif lies at 72–74; sequence EPN. Positions 80, 95, and 96 each coordinate Ca(2+). A disulfide bond links Cys82 and Cys99.

Belongs to the true venom lectin family. As to expression, expressed by the venom gland.

It is found in the secreted. Mannose-binding lectin which recognizes specific carbohydrate structures and agglutinates a variety of animal cells by binding to cell-surface glycoproteins and glycolipids. May be a calcium-dependent lectin. In Pseudoferania polylepis (Macleay's water snake), this protein is C-type lectin lectoxin-Enh1.